Reading from the N-terminus, the 527-residue chain is Rhamnogalacturonate lyase A (527 aa).

Residues M1–A19 form the signal peptide. Disulfide bonds link C49–C92 and C183–C192. N350 is a glycosylation site (N-linked (GlcNAc...) asparagine).

Belongs to the polysaccharide lyase 4 family.

The protein localises to the secreted. The enzyme catalyses Endotype eliminative cleavage of L-alpha-rhamnopyranosyl-(1-&gt;4)-alpha-D-galactopyranosyluronic acid bonds of rhamnogalacturonan I domains in ramified hairy regions of pectin leaving L-rhamnopyranose at the reducing end and 4-deoxy-4,5-unsaturated D-galactopyranosyluronic acid at the non-reducing end.. In terms of biological role, pectinolytic enzyme that has a positive effect in the apple hot-mash liquefaction process. This endolyase hydrolyzes the alpha-L-rhamnopyranosyl-(1,4)-alpha-D-galacturonopyranosyl glycosidic linkage by beta-elimination, thereby generating oligosaccharides terminating at the non-reducing end with a hex-4-enopyranosyluronic acid residue. The sequence is that of Rhamnogalacturonate lyase A (rglA) from Aspergillus aculeatus.